The chain runs to 715 residues: 1,4-alpha-glucan branching enzyme GlgB (715 aa).

Aspartate 396 serves as the catalytic Nucleophile. Glutamate 449 (proton donor) is an active-site residue.

This sequence belongs to the glycosyl hydrolase 13 family. GlgB subfamily. Monomer.

The enzyme catalyses Transfers a segment of a (1-&gt;4)-alpha-D-glucan chain to a primary hydroxy group in a similar glucan chain.. It functions in the pathway glycan biosynthesis; glycogen biosynthesis. Its function is as follows. Catalyzes the formation of the alpha-1,6-glucosidic linkages in glycogen by scission of a 1,4-alpha-linked oligosaccharide from growing alpha-1,4-glucan chains and the subsequent attachment of the oligosaccharide to the alpha-1,6 position. The protein is 1,4-alpha-glucan branching enzyme GlgB of Vibrio vulnificus (strain CMCP6).